An 882-amino-acid polypeptide reads, in one-letter code: ABC transporter H family member 4 (882 aa).

Transmembrane regions (helical) follow at residues 4–24, 35–55, and 79–101; these read WIKL…ISVF, LLFK…LLPW, and TNGP…YAIL. In terms of domain architecture, ABC transporter spans 384-863; the sequence is FSYENKFSSE…NAQVYYKLLG (480 aa). 418–425 lines the ATP pocket; it reads GQNRSGKS. Disordered regions lie at residues 522–617, 634–669, and 710–730; these read FDPD…YSTI, SMSQ…NSGV, and NSGG…NQRS. Composition is skewed to low complexity over residues 528 to 617 and 647 to 667; these read IPPT…YSTI and NGNN…INNS. Acidic residues predominate over residues 715-724; sequence DESDDDDEEA.

The protein belongs to the ABC transporter superfamily. ABCH family.

It localises to the membrane. The polypeptide is ABC transporter H family member 4 (abcH4) (Dictyostelium discoideum (Social amoeba)).